The chain runs to 32 residues: U5-ctenitoxin-Pn1a (32 aa).

Intrachain disulfides connect cysteine 3-cysteine 16, cysteine 9-cysteine 21, and cysteine 15-cysteine 30.

Expressed by the venom gland.

Its subcellular location is the secreted. In terms of biological role, blocks voltage-gated sodium channels (Nav). Causes tail erection, scratching and a reduction in mobility at a dose level of 1.40 mg/mouse. This is U5-ctenitoxin-Pn1a from Phoneutria nigriventer (Brazilian armed spider).